Consider the following 331-residue polypeptide: RNA/RNP complex-1-interacting phosphatase (331 aa).

The Tyrosine-protein phosphatase domain occupies 61 to 208 (FEKHLAPEEC…LRNGPIRKNW (148 aa)). Cys-152 acts as the Phosphocysteine intermediate in catalysis. 153–158 (THGVNR) provides a ligand contact to substrate. Arg-158 serves as the catalytic Proton donor/acceptor.

This sequence belongs to the protein-tyrosine phosphatase family. Non-receptor class dual specificity subfamily. In terms of assembly, monomer. May interact with SFRS7 and SFRS9/SRP30C.

The protein resides in the nucleus. The protein localises to the nucleus speckle. Its function is as follows. Possesses RNA 5'-triphosphatase and diphosphatase activities, but displays a poor protein-tyrosine phosphatase activity. In addition, has phosphatase activity with ATP, ADP and O-methylfluorescein phosphate (in vitro). Binds to RNA. May participate in nuclear mRNA metabolism. This is RNA/RNP complex-1-interacting phosphatase (DUSP11) from Bos taurus (Bovine).